A 265-amino-acid polypeptide reads, in one-letter code: 3-methyl-2-oxobutanoate hydroxymethyltransferase (265 aa).

Residues Asp45 and Asp84 each contribute to the Mg(2+) site. 3-methyl-2-oxobutanoate-binding positions include 45–46, Asp84, and Lys112; that span reads DS. Residue Glu114 coordinates Mg(2+). Glu181 acts as the Proton acceptor in catalysis.

It belongs to the PanB family. Homodecamer; pentamer of dimers. The cofactor is Mg(2+).

It localises to the cytoplasm. The catalysed reaction is 3-methyl-2-oxobutanoate + (6R)-5,10-methylene-5,6,7,8-tetrahydrofolate + H2O = 2-dehydropantoate + (6S)-5,6,7,8-tetrahydrofolate. It functions in the pathway cofactor biosynthesis; (R)-pantothenate biosynthesis; (R)-pantoate from 3-methyl-2-oxobutanoate: step 1/2. In terms of biological role, catalyzes the reversible reaction in which hydroxymethyl group from 5,10-methylenetetrahydrofolate is transferred onto alpha-ketoisovalerate to form ketopantoate. The chain is 3-methyl-2-oxobutanoate hydroxymethyltransferase from Yersinia pseudotuberculosis serotype O:1b (strain IP 31758).